Here is a 59-residue protein sequence, read N- to C-terminus: Eag protein (59 aa).

This Salmonella phage P22 (Bacteriophage P22) protein is Eag protein (eag).